Consider the following 144-residue polypeptide: Large ribosomal subunit protein uL15 (144 aa).

A disordered region spans residues 1 to 48; it reads MIKLESLQDPSPRKRRTKLLGRGPSSGHGKTSCRGHKGDGSRSGYKRR.

The protein belongs to the universal ribosomal protein uL15 family. In terms of assembly, part of the 50S ribosomal subunit.

Binds to the 23S rRNA. The sequence is that of Large ribosomal subunit protein uL15 from Chlamydia caviae (strain ATCC VR-813 / DSM 19441 / 03DC25 / GPIC) (Chlamydophila caviae).